Here is a 198-residue protein sequence, read N- to C-terminus: Recombination protein RecR (198 aa).

The segment at 57–72 adopts a C4-type zinc-finger fold; sequence CSVCGNLTDEDPCSIC. Residues 80-175 form the Toprim domain; that stretch reads SMILVVEDSK…KVTRLARGLA (96 aa).

It belongs to the RecR family.

In terms of biological role, may play a role in DNA repair. It seems to be involved in an RecBC-independent recombinational process of DNA repair. It may act with RecF and RecO. The protein is Recombination protein RecR of Streptococcus uberis (strain ATCC BAA-854 / 0140J).